Consider the following 59-residue polypeptide: Aedesin (59 aa).

The N-terminal stretch at 1–23 is a signal peptide; that stretch reads MNFTKLFAIVLLAALVLLGQTEA.

This sequence belongs to the cecropin family. In terms of tissue distribution, salivary gland (at protein level).

The protein resides in the secreted. Functionally, antimicrobial peptide. Exhibits antibacterial activity against Gram-negative bacteria, such as Escherichia coli, Pseudomonas aeruginosa, Acinetobacter baumannii and Klebsiella pneumoniae. Shows no antibacterial effects against Gram-positive bacteria, such as Staphylococcus aureus, Enterococcus faecalis and Enterococcus faecium. Exhibits antiviral activity against all four dengue virus serotypes and chikungunya virus. Exhibits leishmanicidal activity. Partially neutralizes lipopolysaccharides (LPS). Exhibits anti-inflammatory properties: inhibits LPS-induced iNOS/NOS2 transcription, nitric oxide (NO) and pro-inflammatory cytokine production in mouse macrophages and human peripheral blood mononuclear cells (PBMCs); inhibits LPS-induced activation of MAPK and NF-kappa-B signaling pathways in mouse macrophages. This Aedes aegypti (Yellowfever mosquito) protein is Aedesin.